The chain runs to 113 residues: Eukaryotic translation initiation factor 1b (113 aa).

Residue serine 2 is modified to N-acetylserine. At serine 9 the chain carries Phosphoserine.

The protein belongs to the SUI1 family.

Functionally, probably involved in translation. The protein is Eukaryotic translation initiation factor 1b (EIF1B) of Homo sapiens (Human).